The chain runs to 212 residues: Peptide methionine sulfoxide reductase MsrA (212 aa).

The active site involves cysteine 52.

This sequence belongs to the MsrA Met sulfoxide reductase family.

It catalyses the reaction L-methionyl-[protein] + [thioredoxin]-disulfide + H2O = L-methionyl-(S)-S-oxide-[protein] + [thioredoxin]-dithiol. The enzyme catalyses [thioredoxin]-disulfide + L-methionine + H2O = L-methionine (S)-S-oxide + [thioredoxin]-dithiol. Its function is as follows. Has an important function as a repair enzyme for proteins that have been inactivated by oxidation. Catalyzes the reversible oxidation-reduction of methionine sulfoxide in proteins to methionine. The sequence is that of Peptide methionine sulfoxide reductase MsrA from Salmonella schwarzengrund (strain CVM19633).